Here is a 184-residue protein sequence, read N- to C-terminus: ATP-dependent protease subunit HslV (184 aa).

Residue Thr12 is part of the active site. Na(+) is bound by residues Ala166, Cys169, and Thr172.

It belongs to the peptidase T1B family. HslV subfamily. In terms of assembly, a double ring-shaped homohexamer of HslV is capped on each side by a ring-shaped HslU homohexamer. The assembly of the HslU/HslV complex is dependent on binding of ATP.

The protein localises to the cytoplasm. The catalysed reaction is ATP-dependent cleavage of peptide bonds with broad specificity.. With respect to regulation, allosterically activated by HslU binding. In terms of biological role, protease subunit of a proteasome-like degradation complex believed to be a general protein degrading machinery. This is ATP-dependent protease subunit HslV from Brucella ovis (strain ATCC 25840 / 63/290 / NCTC 10512).